The chain runs to 393 residues: Isocitrate dehydrogenase [NAD] subunit gamma 1, mitochondrial (393 aa).

Residues 1–39 (MALKVAIAAGSAAKAIFKPALLCRPWEVLAAHEAPRRSI) constitute a mitochondrion transit peptide. Residue threonine 120 participates in citrate binding. A Phosphoserine modification is found at serine 130. Asparagine 133 lines the citrate pocket. Residues arginine 136 and arginine 167 each coordinate substrate. Lysine 206 carries the N6-acetyllysine modification. Residue lysine 226 is modified to N6-succinyllysine. Aspartate 254 serves as a coordination point for substrate. Mn(2+) is bound at residue aspartate 254. The ADP site is built by asparagine 312, threonine 313, and asparagine 324.

The protein belongs to the isocitrate and isopropylmalate dehydrogenases family. Heterooligomer of subunits alpha (IDH3A), beta (IDH3B), and gamma (IDH3G) in the apparent ratio of 2:1:1. The heterodimer containing one IDH3A and one IDH3B subunit and the heterodimer containing one IDH3A and one IDH3G subunit assemble into a heterotetramer (which contains two subunits of IDH3A, one of IDH3B and one of IDH3G) and further into the heterooctamer. The cofactor is Mg(2+). Mn(2+) serves as cofactor.

It is found in the mitochondrion. The heterotetramer and the heterodimer composed of IDH3A and IDH3G subunits can be allosterically activated by citrate (CIT) or/and ADP, and the two activators can act independently or synergistically. The heterodimer composed of IDH3A and IDH3B subunits cannot be allosterically regulated and the allosteric regulation of the heterotetramer is through the IDH3G subunit and not the IDH3B subunit. The IDH3G subunit contains the allosteric site which consists of a CIT-binding site and an ADP-binding site, and the binding of CIT and ADP causes conformational changes at the allosteric site which are transmitted to the active site in the catalytic subunit (IDH3A) through a cascade of conformational changes at the heterodimer interface, leading to stabilization of the isocitrate-binding at the active site and thus activation of the enzyme. ATP can activate the heterotetramer and the heterodimer composed of IDH3A and IDH3G subunits at low concentrations but inhibits their activities at high concentrations, whereas ATP exhibits only inhibitory effect on the heterodimer composed of IDH3A and IDH3B subunits. Regulatory subunit which plays a role in the allosteric regulation of the enzyme catalyzing the decarboxylation of isocitrate (ICT) into alpha-ketoglutarate. The heterodimer composed of the alpha (IDH3A) and beta (IDH3B) subunits and the heterodimer composed of the alpha (IDH3A) and gamma (IDH3G) subunits, have considerable basal activity but the full activity of the heterotetramer (containing two subunits of IDH3A, one of IDH3B and one of IDH3G) requires the assembly and cooperative function of both heterodimers. The protein is Isocitrate dehydrogenase [NAD] subunit gamma 1, mitochondrial (Idh3g) of Rattus norvegicus (Rat).